A 289-amino-acid polypeptide reads, in one-letter code: Oxaloacetate decarboxylase (289 aa).

Substrate is bound at residue serine 50. Aspartate 88 serves as a coordination point for Mg(2+). Residues arginine 159 and histidine 235 each contribute to the substrate site.

The protein belongs to the isocitrate lyase/PEP mutase superfamily. Oxaloacetate decarboxylase family. In terms of assembly, homotetramer; dimer of dimers. The cofactor is Mg(2+).

It carries out the reaction oxaloacetate + H(+) = pyruvate + CO2. Catalyzes the decarboxylation of oxaloacetate into pyruvate. Seems to play a role in maintaining cellular concentrations of bicarbonate and pyruvate. This Pseudomonas fluorescens (strain ATCC BAA-477 / NRRL B-23932 / Pf-5) protein is Oxaloacetate decarboxylase.